The following is a 264-amino-acid chain: Vitellin-degrading protease (264 aa).

Residues 1–15 (MTNSLLICFTILGLA) form the signal peptide. Residues 16 to 27 (ASSPTKPIGDIR) constitute a propeptide, activation peptide. The 226-residue stretch at 28-253 (IVGGEDIVIT…LREWVDENIT (226 aa)) folds into the Peptidase S1 domain. Cysteine 53 and cysteine 69 are oxidised to a cystine. Residues histidine 68 and aspartate 113 each act as charge relay system in the active site. A disulfide bridge connects residues cysteine 178 and cysteine 194. Substrate is bound at residue aspartate 203. Cysteine 205 and cysteine 229 are joined by a disulfide. The active-site Charge relay system is the serine 209. N-linked (GlcNAc...) asparagine glycosylation occurs at asparagine 251.

It belongs to the peptidase S1 family. Post-translationally, cleavage after Arg-27 leads to beta-VTN protease and subsequent cleavage after Arg-89 leads to alpha-VTN.

Responsible for the degradation of vitellin in eggs at the head pigmentation stage. This Bombyx mori (Silk moth) protein is Vitellin-degrading protease.